Here is a 963-residue protein sequence, read N- to C-terminus: Bifunctional glutamine synthetase adenylyltransferase/adenylyl-removing enzyme (963 aa).

Positions 1–451 (MAAPSELQLY…EHFADIIAER (451 aa)) are adenylyl removase. The tract at residues 461-963 (TIEWKALWAG…VAFWEKVFAE (503 aa)) is adenylyl transferase.

It belongs to the GlnE family. Mg(2+) is required as a cofactor.

The enzyme catalyses [glutamine synthetase]-O(4)-(5'-adenylyl)-L-tyrosine + phosphate = [glutamine synthetase]-L-tyrosine + ADP. It carries out the reaction [glutamine synthetase]-L-tyrosine + ATP = [glutamine synthetase]-O(4)-(5'-adenylyl)-L-tyrosine + diphosphate. Involved in the regulation of glutamine synthetase GlnA, a key enzyme in the process to assimilate ammonia. When cellular nitrogen levels are high, the C-terminal adenylyl transferase (AT) inactivates GlnA by covalent transfer of an adenylyl group from ATP to specific tyrosine residue of GlnA, thus reducing its activity. Conversely, when nitrogen levels are low, the N-terminal adenylyl removase (AR) activates GlnA by removing the adenylyl group by phosphorolysis, increasing its activity. The regulatory region of GlnE binds the signal transduction protein PII (GlnB) which indicates the nitrogen status of the cell. In Hahella chejuensis (strain KCTC 2396), this protein is Bifunctional glutamine synthetase adenylyltransferase/adenylyl-removing enzyme.